The following is a 267-amino-acid chain: Undecaprenyl-diphosphatase (267 aa).

The next 7 helical transmembrane spans lie at 39 to 59, 87 to 107, 112 to 132, 145 to 165, 183 to 203, 216 to 236, and 244 to 264; these read PGLA…IWYF, VLYL…LNDL, FRSP…LWAV, VTLR…VPGV, PSVA…AVIV, LPLL…ISVL, and SFGV…ATLA.

It belongs to the UppP family.

Its subcellular location is the cell inner membrane. It catalyses the reaction di-trans,octa-cis-undecaprenyl diphosphate + H2O = di-trans,octa-cis-undecaprenyl phosphate + phosphate + H(+). Catalyzes the dephosphorylation of undecaprenyl diphosphate (UPP). Confers resistance to bacitracin. In Gemmatimonas aurantiaca (strain DSM 14586 / JCM 11422 / NBRC 100505 / T-27), this protein is Undecaprenyl-diphosphatase.